The primary structure comprises 347 residues: NHL repeat-containing protein 3 (347 aa).

The signal sequence occupies residues 1–25; sequence MARFWVCVAGAGFFLAFLVLHSRFC. The N-linked (GlcNAc...) asparagine glycan is linked to N32. One copy of the NHL 1 repeat lies at 47–93; sequence RLDVGWPKHPEYFTGTTFCVAVDSLNGLVYIGQRGDNIPKILVFTED. N101 carries an N-linked (GlcNAc...) asparagine glycan. 2 NHL repeats span residues 150 to 196 and 200 to 243; these read TPGK…LSQD and LWLH…FDKD. N206 and N278 each carry an N-linked (GlcNAc...) asparagine glycan. One copy of the NHL 4 repeat lies at 294 to 338; that stretch reads GECSVISTIQLADQVLPHLLEVDRKTGAVYVAEIGAKQVQKYVPL.

Its subcellular location is the secreted. The chain is NHL repeat-containing protein 3 (NHLRC3) from Homo sapiens (Human).